The sequence spans 448 residues: Probable protein phosphatase 2C 74 (448 aa).

The interval 1–48 is disordered; that stretch reads MGSCLSSSGGGGSRRSLHGSPHVPGPGRRKRPPKRRPGSCSSSFDNTE. Residue Gly-2 is the site of N-myristoyl glycine attachment. The segment covering 27–37 has biased composition (basic residues); that stretch reads GRRKRPPKRRP. One can recognise a PPM-type phosphatase domain in the interval 67 to 384; the sequence is TVSLFSQQGK…DDCAVVCLFL (318 aa). 4 residues coordinate Mn(2+): Asp-103, Gly-104, Asp-329, and Asp-375. Residues 401–431 are disordered; it reads HINNGVTEPEPDTASSSTPDSGTGSPELNGV. A compositionally biased stretch (low complexity) spans 412 to 426; sequence DTASSSTPDSGTGSP.

This sequence belongs to the PP2C family. As to quaternary structure, interacts with KIN10. It depends on Mg(2+) as a cofactor. The cofactor is Mn(2+). Expressed in the whole plant.

Its subcellular location is the cell membrane. The catalysed reaction is O-phospho-L-seryl-[protein] + H2O = L-seryl-[protein] + phosphate. It carries out the reaction O-phospho-L-threonyl-[protein] + H2O = L-threonyl-[protein] + phosphate. In terms of biological role, acts as a protein phosphatase. The sequence is that of Probable protein phosphatase 2C 74 from Arabidopsis thaliana (Mouse-ear cress).